The following is a 318-amino-acid chain: CRISPR-associated endonuclease Cas1 1 (318 aa).

3 residues coordinate Mn(2+): Glu157, His222, and Glu237.

It belongs to the CRISPR-associated endonuclease Cas1 family. As to quaternary structure, homodimer, forms a heterotetramer with a Cas2 homodimer. Requires Mg(2+) as cofactor. Mn(2+) is required as a cofactor.

In terms of biological role, CRISPR (clustered regularly interspaced short palindromic repeat), is an adaptive immune system that provides protection against mobile genetic elements (viruses, transposable elements and conjugative plasmids). CRISPR clusters contain spacers, sequences complementary to antecedent mobile elements, and target invading nucleic acids. CRISPR clusters are transcribed and processed into CRISPR RNA (crRNA). Acts as a dsDNA endonuclease. Involved in the integration of spacer DNA into the CRISPR cassette. The protein is CRISPR-associated endonuclease Cas1 1 of Francisella tularensis subsp. novicida (strain U112).